The sequence spans 256 residues: Small ribosomal subunit protein eS1 (256 aa).

N-acetylalanine; partial is present on Ala-2.

This sequence belongs to the eukaryotic ribosomal protein eS1 family. As to quaternary structure, component of the small ribosomal subunit. Mature ribosomes consist of a small (40S) and a large (60S) subunit. The 40S subunit contains about 33 different proteins and 1 molecule of RNA (18S). The 60S subunit contains about 49 different proteins and 3 molecules of RNA (25S, 5.8S and 5S).

It localises to the cytoplasm. In Postia placenta (strain ATCC 44394 / Madison 698-R) (Brown rot fungus), this protein is Small ribosomal subunit protein eS1.